The primary structure comprises 392 residues: tRNA (guanine-N(7)-)-methyltransferase (392 aa).

Positions 123, 148, and 175 each coordinate S-adenosyl-L-methionine. The substrate site is built by Lys201 and Asp231.

The protein belongs to the class I-like SAM-binding methyltransferase superfamily. TrmB family.

The enzyme catalyses guanosine(46) in tRNA + S-adenosyl-L-methionine = N(7)-methylguanosine(46) in tRNA + S-adenosyl-L-homocysteine. It functions in the pathway tRNA modification; N(7)-methylguanine-tRNA biosynthesis. Its function is as follows. Catalyzes the formation of N(7)-methylguanine at position 46 (m7G46) in tRNA. The protein is tRNA (guanine-N(7)-)-methyltransferase of Campylobacter jejuni subsp. doylei (strain ATCC BAA-1458 / RM4099 / 269.97).